A 1388-amino-acid chain; its full sequence is DNA-directed RNA polymerase subunit beta (1388 aa).

This sequence belongs to the RNA polymerase beta chain family. As to quaternary structure, the RNAP catalytic core consists of 2 alpha, 1 beta, 1 beta' and 1 omega subunit. When a sigma factor is associated with the core the holoenzyme is formed, which can initiate transcription.

The enzyme catalyses RNA(n) + a ribonucleoside 5'-triphosphate = RNA(n+1) + diphosphate. DNA-dependent RNA polymerase catalyzes the transcription of DNA into RNA using the four ribonucleoside triphosphates as substrates. This chain is DNA-directed RNA polymerase subunit beta, found in Stenotrophomonas maltophilia (strain K279a).